Here is a 441-residue protein sequence, read N- to C-terminus: Probable carboxypeptidase NFIA_052450 (441 aa).

Positions 1–16 (MKPLSSLLLSAALSAA) are cleaved as a signal peptide. N-linked (GlcNAc...) asparagine glycans are attached at residues Asn88 and Asn150. Position 166 (Asp166) interacts with Zn(2+). The active-site Proton acceptor is Glu198. A Zn(2+)-binding site is contributed by Glu199. 2 N-linked (GlcNAc...) asparagine glycosylation sites follow: Asn354 and Asn373.

Belongs to the peptidase M20A family. Zn(2+) serves as cofactor.

It localises to the secreted. This Neosartorya fischeri (strain ATCC 1020 / DSM 3700 / CBS 544.65 / FGSC A1164 / JCM 1740 / NRRL 181 / WB 181) (Aspergillus fischerianus) protein is Probable carboxypeptidase NFIA_052450.